The following is a 201-amino-acid chain: MAEPGFFNAMLIGALIFGYVLGSIPFGLILARLAGLGDVRAIGSGNIGATNVLRTGNKKLAAATLILDALKGTAAALIAAHFGQNAAIAAGFGAFIGHLFPVWIGFKGGKGVATYLGVLIGLAWAGALVFAAAWIVTALLTRYSSLSALVASLVVPIALYSRGNQALAALFAIMTVIVFIKHRANISRLLNGTESKIGAKG.

Helical transmembrane passes span 10-30 (MLIG…GLIL), 60-80 (LAAA…LIAA), 86-106 (AAIA…WIGF), 116-136 (LGVL…AWIV), 139-159 (LLTR…PIAL), and 166-186 (ALAA…RANI).

This sequence belongs to the PlsY family. As to quaternary structure, probably interacts with PlsX.

The protein localises to the cell inner membrane. The catalysed reaction is an acyl phosphate + sn-glycerol 3-phosphate = a 1-acyl-sn-glycero-3-phosphate + phosphate. The protein operates within lipid metabolism; phospholipid metabolism. In terms of biological role, catalyzes the transfer of an acyl group from acyl-phosphate (acyl-PO(4)) to glycerol-3-phosphate (G3P) to form lysophosphatidic acid (LPA). This enzyme utilizes acyl-phosphate as fatty acyl donor, but not acyl-CoA or acyl-ACP. The chain is Glycerol-3-phosphate acyltransferase from Brucella suis (strain ATCC 23445 / NCTC 10510).